Reading from the N-terminus, the 430-residue chain is Aspartate aminotransferase, mitochondrial (430 aa).

A mitochondrion-targeting transit peptide spans 1–29 (MALLHSGRVLSGMAAAFHPGLAAAASARA). Thr-48 is subject to Phosphothreonine. Lys-59 is modified (N6-acetyllysine). Residue Gly-65 participates in substrate binding. Lys-73 bears the N6-acetyllysine; alternate mark. At Lys-73 the chain carries N6-succinyllysine; alternate. Lys-82 carries the post-translational modification N6-acetyllysine. Lys-90 is subject to N6-acetyllysine; alternate. Residue Lys-90 is modified to N6-succinyllysine; alternate. A 3'-nitrotyrosine; alternate modification is found at Tyr-96. A Phosphotyrosine; alternate modification is found at Tyr-96. Lys-107 and Lys-122 each carry N6-acetyllysine; alternate. 2 positions are modified to N6-succinyllysine; alternate: Lys-107 and Lys-122. Ser-143 is modified (phosphoserine). Lys-159 carries the N6-acetyllysine; alternate modification. Lys-159 carries the post-translational modification N6-succinyllysine; alternate. Position 162 (Trp-162) interacts with substrate. At Lys-185 the chain carries N6-acetyllysine; alternate. N6-succinyllysine; alternate is present on Lys-185. Asn-215 lines the substrate pocket. Lys-227 carries the N6-succinyllysine modification. Lys-234 carries the N6-acetyllysine modification. N6-acetyllysine; alternate is present on residues Lys-279 and Lys-296. N6-(pyridoxal phosphate)lysine; alternate is present on Lys-279. Lys-296 bears the N6-succinyllysine; alternate mark. The residue at position 302 (Lys-302) is an N6-acetyllysine. Lys-309 carries the post-translational modification N6-acetyllysine; alternate. Lys-309 is subject to N6-succinyllysine; alternate. At Arg-313 the chain carries Asymmetric dimethylarginine. Lys-338 bears the N6-acetyllysine; alternate mark. Residue Lys-338 is modified to N6-succinyllysine; alternate. At Lys-345 the chain carries N6-acetyllysine. Lys-363 is modified (N6-acetyllysine; alternate). At Lys-363 the chain carries N6-succinyllysine; alternate. Residues Lys-364 and Lys-387 each carry the N6-acetyllysine modification. An N6-acetyllysine; alternate mark is found at Lys-396 and Lys-404. An N6-succinyllysine; alternate mark is found at Lys-396 and Lys-404. Arg-407 lines the substrate pocket.

Belongs to the class-I pyridoxal-phosphate-dependent aminotransferase family. Homodimer. Pyridoxal 5'-phosphate serves as cofactor. In terms of tissue distribution, expressed in all tissues tested: liver, pancreas, kidney, heart, spleen, arterioles, and lymphocytes.

The protein localises to the mitochondrion matrix. It localises to the cell membrane. The enzyme catalyses L-aspartate + 2-oxoglutarate = oxaloacetate + L-glutamate. The catalysed reaction is L-kynurenine + 2-oxoglutarate = kynurenate + L-glutamate + H2O. In terms of biological role, catalyzes the irreversible transamination of the L-tryptophan metabolite L-kynurenine to form kynurenic acid (KA). As a member of the malate-aspartate shuttle, it has a key role in the intracellular NAD(H) redox balance. Is important for metabolite exchange between mitochondria and cytosol, and for amino acid metabolism. Facilitates cellular uptake of long-chain free fatty acids. The protein is Aspartate aminotransferase, mitochondrial (Got2) of Rattus norvegicus (Rat).